Here is a 208-residue protein sequence, read N- to C-terminus: Imidazoleglycerol-phosphate dehydratase (208 aa).

Positions 1-22 are disordered; it reads MTRRAAVKAPRAGAAARRGSVA. Low complexity predominate over residues 7–19; that stretch reads VKAPRAGAAARRG.

It belongs to the imidazoleglycerol-phosphate dehydratase family.

It localises to the cytoplasm. The enzyme catalyses D-erythro-1-(imidazol-4-yl)glycerol 3-phosphate = 3-(imidazol-4-yl)-2-oxopropyl phosphate + H2O. Its pathway is amino-acid biosynthesis; L-histidine biosynthesis; L-histidine from 5-phospho-alpha-D-ribose 1-diphosphate: step 6/9. This Anaeromyxobacter dehalogenans (strain 2CP-C) protein is Imidazoleglycerol-phosphate dehydratase.